Consider the following 354-residue polypeptide: Guanine nucleotide-binding protein G(o) subunit alpha (354 aa).

Glycine 2 carries N-myristoyl glycine lipidation. Residue cysteine 3 is the site of S-palmitoyl cysteine attachment. A G-alpha domain is found at 32–354; the sequence is KDIKLLLLGA…ANNLRGCGLY (323 aa). The tract at residues 35–48 is G1 motif; that stretch reads KLLLLGAGESGKST. GTP contacts are provided by residues 40–47, 176–182, 201–205, 270–273, and alanine 326; these read GAGESGKS, LRTRVKT, DVGGQ, and NKKD. Residues serine 47 and threonine 182 each contribute to the Mg(2+) site. Residues 174 to 182 form a G2 motif region; that stretch reads DILRTRVKT. Residues 197–206 form a G3 motif region; that stretch reads FKLFDVGGQR. The interval 266 to 273 is G4 motif; sequence ILFLNKKD. The tract at residues 324–329 is G5 motif; it reads TCATDT.

This sequence belongs to the G-alpha family. G(i/o/t/z) subfamily. As to quaternary structure, g proteins are composed of 3 units; alpha, beta and gamma. The alpha chain contains the guanine nucleotide binding site.

In terms of biological role, guanine nucleotide-binding proteins (G proteins) are involved as modulators or transducers in various transmembrane signaling systems. The G(o) protein function is not clear. This is Guanine nucleotide-binding protein G(o) subunit alpha from Locusta migratoria (Migratory locust).